The following is a 426-amino-acid chain: LIM/homeobox protein Lhx2 (426 aa).

The segment covering 14–24 has biased composition (basic and acidic residues); that stretch reads VIDEMDRRQER. The segment at 14-42 is disordered; it reads VIDEMDRRQERGSGISSAIDRGDTETTMP. LIM zinc-binding domains follow at residues 52–104 and 114–167; these read CAGC…CKED and CARC…CRLH. Positions 248 to 268 are disordered; that stretch reads DAEHLDRDQPYPSSQKTKRMR. The homeobox DNA-binding region spans 264–323; the sequence is TKRMRTSFKHHQLRTMKSYFAINHNPDAKDLKQLAQKTGLTKRVLQVWFQNARAKFRRNL. The Nuclear localization signal signature appears at 305–321; that stretch reads KRVLQVWFQNARAKFRR. Residues 326–354 show a composition bias toward polar residues; the sequence is QENTGVDKTSDATLQTGTPSGPASELSNA. The tract at residues 326-370 is disordered; the sequence is QENTGVDKTSDATLQTGTPSGPASELSNASLSPSSTPTTLTDLTS. The segment covering 355 to 370 has biased composition (low complexity); the sequence is SLSPSSTPTTLTDLTS.

Interacts (via LIM domains) with CITED2. Interacts with POU4F2. Found in discrete regions of the developing CNS, primarily in diencephalic and telencephalic structures and a subset of lymphoid tissues. Also found in embryonic spinal cord and fetal liver.

Its subcellular location is the nucleus. Its function is as follows. Acts as a transcriptional activator. Stimulates the promoter of the alpha-glycoprotein gene. Transcriptional regulatory protein involved in the control of cell differentiation in developing lymphoid and neural cell types. The sequence is that of LIM/homeobox protein Lhx2 (Lhx2) from Rattus norvegicus (Rat).